The chain runs to 358 residues: Probable D-xylulose reductase A (358 aa).

Zn(2+) is bound by residues Cys47, His72, and Glu73. Position 182 to 187 (182 to 187 (GAGPVG)) interacts with NAD(+).

The protein belongs to the zinc-containing alcohol dehydrogenase family. Zn(2+) serves as cofactor.

The enzyme catalyses xylitol + NAD(+) = D-xylulose + NADH + H(+). Its pathway is carbohydrate degradation; L-arabinose degradation via L-arabinitol; D-xylulose 5-phosphate from L-arabinose (fungal route): step 4/5. Xylitol dehydrogenase which catalyzes the conversion of xylitol to D-xylulose. Xylose is a major component of hemicelluloses such as xylan. Most fungi utilize D-xylose via three enzymatic reactions, xylose reductase (XR), xylitol dehydrogenase (XDH), and xylulokinase, to form xylulose 5-phosphate, which enters pentose phosphate pathway. This is Probable D-xylulose reductase A (xdhA) from Neosartorya fischeri (strain ATCC 1020 / DSM 3700 / CBS 544.65 / FGSC A1164 / JCM 1740 / NRRL 181 / WB 181) (Aspergillus fischerianus).